A 155-amino-acid chain; its full sequence is MTVNPDAPALPTLPLAVETIQGLLPHRYPFALVDRIIDYVPGERAVGIKNVTFNEPQFQGHFPGRPLMPGVLIVEAMAQVGGVIVTLMPDMPQGLFVFAGIDQVRFRRPVVPGDQLVLSAQLLSAKRRRFCKIQGEAMVDGQLAASGELVFSLVE.

Residue H61 is part of the active site.

It belongs to the thioester dehydratase family. FabZ subfamily.

Its subcellular location is the cytoplasm. The enzyme catalyses a (3R)-hydroxyacyl-[ACP] = a (2E)-enoyl-[ACP] + H2O. In terms of biological role, involved in unsaturated fatty acids biosynthesis. Catalyzes the dehydration of short chain beta-hydroxyacyl-ACPs and long chain saturated and unsaturated beta-hydroxyacyl-ACPs. The polypeptide is 3-hydroxyacyl-[acyl-carrier-protein] dehydratase FabZ (Synechococcus sp. (strain ATCC 27144 / PCC 6301 / SAUG 1402/1) (Anacystis nidulans)).